Consider the following 295-residue polypeptide: Acetaldehyde dehydrogenase (295 aa).

11–14 is a binding site for NAD(+); the sequence is SGNI. Cys127 (acyl-thioester intermediate) is an active-site residue. NAD(+) is bound by residues 158-166 and Asn269; that span reads SAGPGTRSN.

This sequence belongs to the acetaldehyde dehydrogenase family.

The catalysed reaction is acetaldehyde + NAD(+) + CoA = acetyl-CoA + NADH + H(+). In Brevibacillus brevis (strain 47 / JCM 6285 / NBRC 100599), this protein is Acetaldehyde dehydrogenase.